We begin with the raw amino-acid sequence, 332 residues long: Glyceraldehyde-3-phosphate dehydrogenase (332 aa).

Residues 11 to 12, Asp-34, Arg-78, and Ser-120 each bind NAD(+); that span reads RI. Residues 151-153, Thr-182, Arg-197, 210-211, and Arg-233 each bind D-glyceraldehyde 3-phosphate; these read SCT and TG. Cys-152 serves as the catalytic Nucleophile. Asn-314 lines the NAD(+) pocket.

The protein belongs to the glyceraldehyde-3-phosphate dehydrogenase family. In terms of assembly, homotetramer.

It localises to the cytoplasm. It carries out the reaction D-glyceraldehyde 3-phosphate + phosphate + NAD(+) = (2R)-3-phospho-glyceroyl phosphate + NADH + H(+). The protein operates within carbohydrate degradation; glycolysis; pyruvate from D-glyceraldehyde 3-phosphate: step 1/5. In terms of biological role, catalyzes the oxidative phosphorylation of glyceraldehyde 3-phosphate (G3P) to 1,3-bisphosphoglycerate (BPG) using the cofactor NAD. The first reaction step involves the formation of a hemiacetal intermediate between G3P and a cysteine residue, and this hemiacetal intermediate is then oxidized to a thioester, with concomitant reduction of NAD to NADH. The reduced NADH is then exchanged with the second NAD, and the thioester is attacked by a nucleophilic inorganic phosphate to produce BPG. The protein is Glyceraldehyde-3-phosphate dehydrogenase (gap) of Kitasatospora aureofaciens (Streptomyces aureofaciens).